The primary structure comprises 469 residues: Phosphoenolpyruvate carboxylase (469 aa).

Belongs to the PEPCase type 2 family. As to quaternary structure, homotetramer. Mg(2+) serves as cofactor.

It catalyses the reaction oxaloacetate + phosphate = phosphoenolpyruvate + hydrogencarbonate. In terms of biological role, catalyzes the irreversible beta-carboxylation of phosphoenolpyruvate (PEP) to form oxaloacetate (OAA), a four-carbon dicarboxylic acid source for the tricarboxylic acid cycle. This Pyrococcus abyssi (strain GE5 / Orsay) protein is Phosphoenolpyruvate carboxylase.